Reading from the N-terminus, the 321-residue chain is L-carnitine dehydrogenase (321 aa).

14-19 (GSGVIG) provides a ligand contact to NAD(+).

The protein belongs to the 3-hydroxyacyl-CoA dehydrogenase family. L-carnitine dehydrogenase subfamily. Homodimer.

It localises to the cytoplasm. It catalyses the reaction carnitine + NAD(+) = 3-dehydrocarnitine + NADH + H(+). Its pathway is amine and polyamine metabolism; carnitine metabolism. Its function is as follows. Catalyzes the NAD(+)-dependent oxidation of L-carnitine to 3-dehydrocarnitine. The polypeptide is L-carnitine dehydrogenase (Pseudomonas putida (strain ATCC 47054 / DSM 6125 / CFBP 8728 / NCIMB 11950 / KT2440)).